Consider the following 513-residue polypeptide: ATP synthase subunit alpha (513 aa).

Glycine 169–serine 176 serves as a coordination point for ATP.

The protein belongs to the ATPase alpha/beta chains family. As to quaternary structure, F-type ATPases have 2 components, CF(1) - the catalytic core - and CF(0) - the membrane proton channel. CF(1) has five subunits: alpha(3), beta(3), gamma(1), delta(1), epsilon(1). CF(0) has three main subunits: a(1), b(2) and c(9-12). The alpha and beta chains form an alternating ring which encloses part of the gamma chain. CF(1) is attached to CF(0) by a central stalk formed by the gamma and epsilon chains, while a peripheral stalk is formed by the delta and b chains.

The protein resides in the cell inner membrane. The catalysed reaction is ATP + H2O + 4 H(+)(in) = ADP + phosphate + 5 H(+)(out). Its function is as follows. Produces ATP from ADP in the presence of a proton gradient across the membrane. The alpha chain is a regulatory subunit. The protein is ATP synthase subunit alpha of Sodalis glossinidius (strain morsitans).